The following is a 530-amino-acid chain: Vesicular acetylcholine transporter (530 aa).

Residues 1 to 33 lie on the Cytoplasmic side of the membrane; sequence MEPTAPTGQARAAATKLSEAVGAALQEPQRQRR. The chain crosses the membrane as a helical span at residues 34–54; the sequence is LVLVIVCVALLLDNMLYMVIV. The Lumenal, vesicle portion of the chain corresponds to 55–125; the sequence is PIVPDYIAHM…PTESEDVKIG (71 aa). 2 N-linked (GlcNAc...) asparagine glycosylation sites follow: Asn89 and Asn96. A helical transmembrane segment spans residues 126–146; sequence VLFASKAILQLLVNPLSGPFI. Topologically, residues 147 to 152 are cytoplasmic; it reads DRMSYD. The chain crosses the membrane as a helical span at residues 153-173; sequence VPLLIGLGVMFASTVMFAFAE. Over 174-182 the chain is Lumenal, vesicle; sequence DYATLFAAR. Residues 183–203 traverse the membrane as a helical segment; that stretch reads SLQGLGSAFADTSGIAMIADK. Over 204–213 the chain is Cytoplasmic; the sequence is YPEEPERSRA. A helical membrane pass occupies residues 214 to 234; the sequence is LGVALAFISFGSLVAPPFGGI. The Lumenal, vesicle portion of the chain corresponds to 235 to 242; the sequence is LYEFAGKR. The chain crosses the membrane as a helical span at residues 243–263; that stretch reads VPFLVLAAVSLFDALLLLAVA. Residues 264–289 lie on the Cytoplasmic side of the membrane; the sequence is KPFSAAARARANLPVGTPIHRLMLDP. A helical transmembrane segment spans residues 290–310; the sequence is YIAVVAGALTTCNIPLAFLEP. At 311-325 the chain is on the lumenal, vesicle side; the sequence is TIATWMKHTMAASEW. Residues 326 to 346 traverse the membrane as a helical segment; that stretch reads EMGMVWLPAFVPHVLGVYLTV. The Cytoplasmic segment spans residues 347–356; it reads RLAARYPHLQ. Residues 357-377 form a helical membrane-spanning segment; sequence WLYGALGLAVIGVSSCVVPAC. Over 378 to 388 the chain is Lumenal, vesicle; the sequence is RSFAPLVVSLC. A helical membrane pass occupies residues 389 to 409; that stretch reads GLCFGIALVDTALLPTLAFLV. Residues 410-422 lie on the Cytoplasmic side of the membrane; it reads DVRHVSVYGSVYA. A helical transmembrane segment spans residues 423-443; it reads IADISYSVAYALGPIVAGHIV. Residues 444–447 are Lumenal, vesicle-facing; it reads HSLG. A helical membrane pass occupies residues 448 to 468; it reads FEQLSLGMGLANLLYAPVLLL. Residues 469-530 lie on the Cytoplasmic side of the membrane; the sequence is LRNVGLLTRS…EDDYNYYSRS (62 aa). The interval 471–530 is mediates interaction with SEC14L1; sequence NVGLLTRSRSERDVLLDEPPQGLYDAVRLREVQGKDGGEPCSPPGPFDGCEDDYNYYSRS. The disordered stretch occupies residues 504–530; the sequence is GKDGGEPCSPPGPFDGCEDDYNYYSRS.

Belongs to the major facilitator superfamily. Vesicular transporter family. As to quaternary structure, interacts with SEC14L1. In terms of tissue distribution, high expression in all major cholinergic cell groups, including peripheral postganglionic parasympathetic cells, preganglionic sympathetic and parasympathetic cells, ventral spinal cord and brainstem motoneurons, cell groups in the basal forebrain, the habenula and the corpus striatum. Weakly expressed in the cortex and hippocampus.

It is found in the cytoplasmic vesicle. The protein localises to the secretory vesicle. Its subcellular location is the synaptic vesicle membrane. It carries out the reaction acetylcholine(out) + 2 H(+)(in) = acetylcholine(in) + 2 H(+)(out). The enzyme catalyses choline(in) + 2 H(+)(out) = choline(out) + 2 H(+)(in). It catalyses the reaction serotonin(in) + 2 H(+)(out) = serotonin(out) + 2 H(+)(in). Potently inhibited by L-vesamicol. Electrogenic antiporter that exchanges one cholinergic neurotransmitter, acetylcholine or choline, with two intravesicular protons across the membrane of synaptic vesicles. Uses the electrochemical proton gradient established by the V-type proton-pump ATPase to store neurotransmitters inside the vesicles prior to their release via exocytosis. Determines cholinergic vesicular quantal size at presynaptic nerve terminals in developing neuro-muscular junctions with an impact on motor neuron differentiation and innervation pattern. Part of forebrain cholinergic system, regulates hippocampal synapse transmissions that underlie spatial memory formation. Can transport serotonin. The chain is Vesicular acetylcholine transporter (Slc18a3) from Rattus norvegicus (Rat).